The sequence spans 121 residues: Large ribosomal subunit protein bL20 (121 aa).

The protein belongs to the bacterial ribosomal protein bL20 family.

In terms of biological role, binds directly to 23S ribosomal RNA and is necessary for the in vitro assembly process of the 50S ribosomal subunit. It is not involved in the protein synthesizing functions of that subunit. The polypeptide is Large ribosomal subunit protein bL20 (Dinoroseobacter shibae (strain DSM 16493 / NCIMB 14021 / DFL 12)).